Here is a 73-residue protein sequence, read N- to C-terminus: Cell division protein ZapB (73 aa).

Residues L3–G67 adopt a coiled-coil conformation.

This sequence belongs to the ZapB family. In terms of assembly, homodimer. The ends of the coiled-coil dimer bind to each other, forming polymers. Interacts with FtsZ.

It is found in the cytoplasm. In terms of biological role, non-essential, abundant cell division factor that is required for proper Z-ring formation. It is recruited early to the divisome by direct interaction with FtsZ, stimulating Z-ring assembly and thereby promoting cell division earlier in the cell cycle. Its recruitment to the Z-ring requires functional FtsA or ZipA. The sequence is that of Cell division protein ZapB from Shewanella sp. (strain MR-4).